Reading from the N-terminus, the 813-residue chain is MKNNQFAIVPTDSETAIAELTKIHFITPDMDALTTVPAVYQALLAKSLPEVHTASGLTHKFNNIMATSQHTLSEWLADATIVNNQVFYNVGLQLLGFLPGQDFELADPLLAMRDIHLPMVGDSAFDREALYYAWYLLLNTRGNNGQTLIESLTTRGYFVPFYQLPNDQKPLFFNGKAQAVFDTNALIRDVVYVEAPLDTDHDGQRDLLKVEILRPAETETGLKVPVLYTASPYNQGINDQAGDAQMHNVDVPLTAKEPDENTYADVEFQPTTAQLPAARTATTTTDTAEETFSREKSYTLNDYFLARGFAVVYAAGIGSIDSDGLAPTGDVDETTSTVAIIEWLTGKRQAFTNRDGNIAIKAWWCNGAVAMTGRSYLGTLATAAATTGVAGLKTIISEAAISSWYDYYRDNGLVVAPDTFQGEDTDVLAAEVFSRSLKAGDAHQIQPAFDQKLAELTADQDRASGNYNRFWDERNYLKNVDKIKADIIMVHGLNDWNVKPRNVANLWDKLQAVPVTKKLILHQGQHIYINNLQSLDFTDMMNLWLSHKLYGLDNHAETLLPNVLVQDNTQAQTWHGYDNWWQDTTDALDFKVQYKELVPADHTVDQRAAHFTDKLPDKLFDHYKHHLDSWQRDLLQEDKLNPLYDHRLLFKSWQAPEDQLLVGIPHVAGSVAVNKNFGMLSFMLIDFGAARRLTVSPQILAAKALDLGYHWREDDLKDFKLAGETPFKMITKGHLNLQNRHHPWHAEAIQPNVFYDFSVDLQPLFHHLLKGHQLGLVIYATDMKMTIRGNQDLQYSLNLNDIRLHVPMKKITD.

Active-site charge relay system residues include Ser-375, Asp-495, and His-526.

The protein belongs to the peptidase S15 family. As to quaternary structure, homodimer.

Its subcellular location is the cytoplasm. It catalyses the reaction Hydrolyzes Xaa-Pro-|- bonds to release unblocked, N-terminal dipeptides from substrates including Ala-Pro-|-p-nitroanilide and (sequentially) Tyr-Pro-|-Phe-Pro-|-Gly-Pro-|-Ile.. Its function is as follows. Removes N-terminal dipeptides sequentially from polypeptides having unsubstituted N-termini provided that the penultimate residue is proline. In Lactiplantibacillus plantarum (strain ATCC BAA-793 / NCIMB 8826 / WCFS1) (Lactobacillus plantarum), this protein is Xaa-Pro dipeptidyl-peptidase.